The chain runs to 455 residues: MSLTVVSMACVGFFLLQGAWPLMGGQDKPFLSARPSTVVPRGGHVALQCHYRRGFNNFMLYKEDRSHVPIFHGRIFQESFIMGPVTPAHAGTYRCRGSRPHSLTGWSAPSNPLVIMVTGNHRKPSLLAHPGPLLKSGETVILQCWSDVMFEHFFLHREGISEDPSRLVGQIHDGVSKANFSIGPLMPVLAGTYRCYGSVPHSPYQLSAPSDPLDIVITGLYEKPSLSAQPGPTVQAGENVTLSCSSWSSYDIYHLSREGEAHERRLRAVPKVNRTFQADFPLGPATHGGTYRCFGSFRALPCVWSNSSDPLLVSVTGNPSSSWPSPTEPSSKSGICRHLHVLIGTSVVIFLFILLLFFLLYRWCSNKKNAAVMDQEPAGDRTVNRQDSDEQDPQEVTYAQLDHCVFIQRKISRPSQRPKTPLTDTSVYTELPNAEPRSKVVSCPRAPQSGLEGVF.

Residues methionine 1–proline 21 form the signal peptide. Residues leucine 22 to histidine 340 are Extracellular-facing. 3 Ig-like C2-type domains span residues glycine 42–serine 102, glycine 137–serine 202, and glycine 237–leucine 300. Disulfide bonds link cysteine 49-cysteine 95 and cysteine 144-cysteine 195. N-linked (GlcNAc...) asparagine glycans are attached at residues asparagine 179, asparagine 239, asparagine 273, and asparagine 306. Cysteine 244 and cysteine 293 are oxidised to a cystine. The chain crosses the membrane as a helical span at residues valine 341–leucine 360. At tyrosine 361–phenylalanine 455 the chain is on the cytoplasmic side.

This sequence belongs to the immunoglobulin superfamily. As to quaternary structure, interacts with peptide-free HLA-F open conformer. As to expression, expressed in astrocytes.

The protein localises to the cell membrane. Functionally, receptor on natural killer (NK) cells and T cells for MHC class I molecules. Upon binding of peptide-free HLA-F open conformer, negatively regulates NK and T cell effector functions. Acts as a receptor on astrocytes for HLA-F. Through interaction with HLA-F, may protect motor neurons from astrocyte-induced toxicity. In Homo sapiens (Human), this protein is Killer cell immunoglobulin-like receptor 3DL2.